The chain runs to 100 residues: uncharacterized protein (100 aa).

This is an uncharacterized protein from Mycoplasma pneumoniae (strain ATCC 29342 / M129 / Subtype 1) (Mycoplasmoides pneumoniae).